We begin with the raw amino-acid sequence, 371 residues long: Conglutinin (371 aa).

The signal sequence occupies residues 1–20 (MLLLPLSVLLLLTQPWRSLG). Positions 46-216 (GLPGHDGQDG…TGAKGESGLA (171 aa)) constitute a Collagen-like domain. The segment at 47–215 (LPGHDGQDGR…ETGAKGESGL (169 aa)) is disordered. Residues 51-65 (DGQDGRECPHGEKGD) are compositionally biased toward basic and acidic residues. K63 carries the 5-hydroxylysine modification. The segment covering 71 to 83 (PAGRAGRPGWVGP) has biased composition (low complexity). P78 carries the post-translational modification 4-hydroxyproline. The residue at position 87 (K87) is a 5-hydroxylysine. A 4-hydroxyproline modification is found at P96. The residue at position 99 (K99) is a 5-hydroxylysine. 4 positions are modified to 4-hydroxyproline: P108, P111, P129, and P132. K135 and K141 each carry 5-hydroxylysine. Residues 139–148 (GPKGGVGAPG) are compositionally biased toward gly residues. 4-hydroxyproline occurs at positions 147 and 153. K159 and K162 each carry 5-hydroxylysine. 2 positions are modified to 4-hydroxyproline: P171 and P195. The residue at position 198 (K198) is a 5-hydroxylysine. A Cell attachment site motif is present at residues 201-203 (RGD). In terms of domain architecture, C-type lectin spans 273–371 (QLCREAKGQL…SKQLLVICEF (99 aa)). 2 disulfide bridges follow: C275–C369 and C347–C361. N337 carries an N-linked (GlcNAc...) asparagine glycan.

This sequence belongs to the SFTPD family. Oligomeric complex of 4 set of homotrimers. In terms of processing, the hydroxylysines may be O-glycosylated.

Its function is as follows. Calcium-dependent lectin-like protein which binds to a yeast cell wall extract and immune complexes through the complement component (C3bi). It is capable of binding non-reducing terminal N-acetylglucosamine, mannose, and fucose residues. This is Conglutinin (CGN1) from Bos taurus (Bovine).